The primary structure comprises 319 residues: Type II secretion system protein C 2 (319 aa).

The Cytoplasmic segment spans residues 1-42; sequence MARVVFRDARIYLIQWLTKIRHTLNQRQSLNTDKEHLRKIVR. Residues 43 to 65 form a helical membrane-spanning segment; the sequence is GMFWLMLLIISAKVAHSLWRYFS. The Periplasmic portion of the chain corresponds to 66-319; that stretch reads FSAEYTAVSP…ARHDISIALR (254 aa).

The protein belongs to the GSP C family. As to quaternary structure, interacts with outer cell membrane protein GspD2 in the periplasm.

It is found in the cell inner membrane. Functionally, involved in a type II secretion system (T2SS, formerly general secretion pathway, GSP) for the export of folded proteins across the outer membrane. The sequence is that of Type II secretion system protein C 2 (gspC2) from Escherichia coli O78:H11 (strain H10407 / ETEC).